The primary structure comprises 148 residues: Deoxyuridine 5'-triphosphate nucleotidohydrolase (148 aa).

Residues 68–70 (RSG), N81, 85–87 (TID), and K95 each bind substrate.

Belongs to the dUTPase family. It depends on Mg(2+) as a cofactor.

It carries out the reaction dUTP + H2O = dUMP + diphosphate + H(+). Its pathway is pyrimidine metabolism; dUMP biosynthesis; dUMP from dCTP (dUTP route): step 2/2. This enzyme is involved in nucleotide metabolism: it produces dUMP, the immediate precursor of thymidine nucleotides and it decreases the intracellular concentration of dUTP so that uracil cannot be incorporated into DNA. The polypeptide is Deoxyuridine 5'-triphosphate nucleotidohydrolase (Rickettsia prowazekii (strain Madrid E)).